The chain runs to 328 residues: MSAAGLLAPAPAPAAAPAAPEYYPEDEEELESAEDDERSCRGRESDEDTEDASETDLAKHDEEDYVEMKEQMYQDKLASLKRQLQQLQEGTLQEYQKRMKKLDQQYRERIRNAELFLQLETEQVERNYIKEKKAAVKEFEDKKVELKENLIAELEEKKKMIENEKLTMELTGDSMEVKPIMTRKLRRRPNDPVPIPDKRRKPAPAQLNYLLTDEQIMEDLRTLNKLKSPKRPASPSSPEHLPATPAESPAQRFEARIEDGKLYYDKRWYHKSQAIYLESKDNQKLSCVISSVGANEIWVRKTSDSTKMRIYVGQLQRGLFVIRRRSAA.

The span at 1–22 shows a compositional bias: low complexity; that stretch reads MSAAGLLAPAPAPAAAPAAPEY. A disordered region spans residues 1–69; it reads MSAAGLLAPA…HDEEDYVEMK (69 aa). Residue S2 is modified to N-acetylserine. The segment at 2-170 is mediates interaction with USP17L2; it reads SAAGLLAPAP…IENEKLTMEL (169 aa). Composition is skewed to acidic residues over residues 23-37 and 45-54; these read YPED…EDDE and SDEDTEDASE. 2 positions are modified to phosphoserine: S32 and S45. T49 is subject to Phosphothreonine. S53 is modified (phosphoserine). Over residues 56-69 the composition is skewed to basic and acidic residues; sequence DLAKHDEEDYVEMK. Residues 66-171 are a coiled coil; it reads VEMKEQMYQD…ENEKLTMELT (106 aa). Residues K69, K178, and K201 each participate in a glycyl lysine isopeptide (Lys-Gly) (interchain with G-Cter in SUMO2) cross-link. The segment at 188-226 is sin3 interaction domain (SID); the sequence is RPNDPVPIPDKRRKPAPAQLNYLLTDEQIMEDLRTLNKL. The disordered stretch occupies residues 226-252; that stretch reads LKSPKRPASPSSPEHLPATPAESPAQR. A phosphoserine mark is found at S228, S234, and S237. The residue at position 244 (T244) is a Phosphothreonine.

This sequence belongs to the SDS3 family. In terms of assembly, interacts with HCFC1. Homodimer. Component of the SIN3 histone deacetylase (HDAC) corepressor complex. Interacts with SIN3A. Interaction with SIN3B enhances the interaction between SIN3B and HDAC1 to form a complex. Component of a mSin3A corepressor complex that contains SIN3A, SAP130, SUDS3/SAP45, ARID4B/SAP180, HDAC1 and HDAC2. Interacts with USP17L2; the interaction is direct. Interacts with FOXK2. In terms of processing, polyubiquitinated. 'Lys-63'-polyubiquitinated SUDS3 positively regulates histone deacetylation. Regulated through deubiquitination by USP17L2/USP17 that cleaves 'Lys-63'-linked ubiquitin chains. As to expression, expressed in all newborn tissues tested, including brain, kidney and liver.

The protein resides in the nucleus. Its function is as follows. Regulatory protein which represses transcription and augments histone deacetylase activity of HDAC1. May have a potential role in tumor suppressor pathways through regulation of apoptosis. May function in the assembly and/or enzymatic activity of the mSin3A corepressor complex or in mediating interactions between the complex and other regulatory complexes. The protein is Sin3 histone deacetylase corepressor complex component SDS3 (Suds3) of Mus musculus (Mouse).